The chain runs to 887 residues: Alanine--tRNA ligase (887 aa).

Residues histidine 564, histidine 568, cysteine 676, and histidine 680 each contribute to the Zn(2+) site.

The protein belongs to the class-II aminoacyl-tRNA synthetase family. The cofactor is Zn(2+).

Its subcellular location is the cytoplasm. It carries out the reaction tRNA(Ala) + L-alanine + ATP = L-alanyl-tRNA(Ala) + AMP + diphosphate. Functionally, catalyzes the attachment of alanine to tRNA(Ala) in a two-step reaction: alanine is first activated by ATP to form Ala-AMP and then transferred to the acceptor end of tRNA(Ala). Also edits incorrectly charged Ser-tRNA(Ala) and Gly-tRNA(Ala) via its editing domain. This is Alanine--tRNA ligase from Agrobacterium fabrum (strain C58 / ATCC 33970) (Agrobacterium tumefaciens (strain C58)).